Consider the following 205-residue polypeptide: High frequency lysogenization protein HflD homolog (205 aa).

The protein belongs to the HflD family.

It localises to the cytoplasm. The protein localises to the cell inner membrane. This Shewanella baltica (strain OS185) protein is High frequency lysogenization protein HflD homolog.